Consider the following 352-residue polypeptide: Schlafen-like protein 4 (352 aa).

The segment at 87–235 is SLFN-like fold; the sequence is FEYQSNFSEV…SDKVYQISSG (149 aa). A helical membrane pass occupies residues 326 to 343; sequence IQNIGWIFFGTALSCCIY.

The protein belongs to the Schlafen family. Component of the PUCH (precursor of 21U RNA 5'-end cleavage holoenzyme) complex; consisting of tofu-1, tofu-2 and either slfl-3 or slfl-4.

The protein localises to the membrane. Its function is as follows. Component of the trimeric PUCH (precursor of 21U RNA 5'-end cleavage holoenzyme) complex, that acts as an endoribonuclease processing the 5'-end of precursor Piwi-interacting RNAs (piRNAs). The PUCH complex consists of tofu-1, tofu-2 and either slfl-3 or slfl-4, where tofu-2 exhibits endoribonuclease activity. PUCH-mediated processing strictly requires a 7-methyl-G cap (m7 G-cap) and an uracil at position three (U3). PUCH also exhibits a strict bias for piRNA precursors with an A or G at position 1. Mature piRNA production is enhanced by the interaction of PUCH with the PETISCO complex, which is stabilizing piRNA precursors and allows their processing by PUCH. This Caenorhabditis elegans protein is Schlafen-like protein 4.